We begin with the raw amino-acid sequence, 286 residues long: 33 kDa chaperonin (286 aa).

Intrachain disulfides connect C225–C227 and C258–C261.

It belongs to the HSP33 family. Post-translationally, under oxidizing conditions two disulfide bonds are formed involving the reactive cysteines. Under reducing conditions zinc is bound to the reactive cysteines and the protein is inactive.

The protein resides in the cytoplasm. Functionally, redox regulated molecular chaperone. Protects both thermally unfolding and oxidatively damaged proteins from irreversible aggregation. Plays an important role in the bacterial defense system toward oxidative stress. This chain is 33 kDa chaperonin, found in Shewanella sediminis (strain HAW-EB3).